The following is a 292-amino-acid chain: Phosphatidylglycerol--prolipoprotein diacylglyceryl transferase (292 aa).

The next 3 helical transmembrane spans lie at L18–I38, L67–Y87, and G105–L125. R150 lines the a 1,2-diacyl-sn-glycero-3-phospho-(1'-sn-glycerol) pocket. The next 3 helical transmembrane spans lie at Q193–W213, G222–V242, and G266–L286.

The protein belongs to the Lgt family.

Its subcellular location is the cell inner membrane. It carries out the reaction L-cysteinyl-[prolipoprotein] + a 1,2-diacyl-sn-glycero-3-phospho-(1'-sn-glycerol) = an S-1,2-diacyl-sn-glyceryl-L-cysteinyl-[prolipoprotein] + sn-glycerol 1-phosphate + H(+). It participates in protein modification; lipoprotein biosynthesis (diacylglyceryl transfer). Its function is as follows. Catalyzes the transfer of the diacylglyceryl group from phosphatidylglycerol to the sulfhydryl group of the N-terminal cysteine of a prolipoprotein, the first step in the formation of mature lipoproteins. This chain is Phosphatidylglycerol--prolipoprotein diacylglyceryl transferase, found in Cereibacter sphaeroides (strain ATCC 17029 / ATH 2.4.9) (Rhodobacter sphaeroides).